We begin with the raw amino-acid sequence, 319 residues long: Transcription factor STKL2 (319 aa).

The interval 1–119 (MAPLESPATA…NKKANPQRVW (119 aa)) is disordered. Residues 21–34 (EIFKSSSEESKPKD) show a composition bias toward basic and acidic residues. Over residues 38–55 (VPSSKTLKSPSAAVNSKT) the composition is skewed to polar residues. Over residues 89–112 (RAGEGSTSRDMHVKRVKKEDDNKK) the composition is skewed to basic and acidic residues.

It belongs to the GeBP family. In terms of tissue distribution, expressed strongly in leaves and flowers, weakly in roots, and very weakly in stems.

The protein resides in the nucleus. Functionally, transcription repressor that binds DNA in a sequence-specific manner, 5'-GCCT-3', to regulate the expression of PGR. Acts as a modulatory component for the glucose-triggered developmental leaf growth process. The chain is Transcription factor STKL2 from Arabidopsis thaliana (Mouse-ear cress).